The primary structure comprises 300 residues: Iron/alpha-ketoglutarate-dependent dioxygenase okaE (300 aa).

3 residues coordinate Fe cation: H134, D136, and H210.

It belongs to the PhyH family. Homodimer. It depends on Fe cation as a cofactor.

It catalyses the reaction okaramine A + 2-oxoglutarate + AH2 + O2 = 12-deshydroxyl okaramine E + succinate + A + CO2 + H2O. It carries out the reaction 12-deshydroxyl okaramine E + 2-oxoglutarate + O2 = okaramine E + succinate + CO2. The enzyme catalyses okaramine A + 2-oxoglutarate + O2 = okaramine E + succinate + CO2. Its pathway is alkaloid biosynthesis. It participates in secondary metabolite biosynthesis; terpenoid biosynthesis. Iron/alpha-ketoglutarate-dependent dioxygenase; part of the gene cluster that mediates the biosynthesis of okaramine B, a prenylated indole alkaloid that possesses an unusual octacyclic ring system, including a four-membered azetidine ring and an eight-membered azocine ring, and that exhibits insecticidal activity against silkworm larvae. Within the pathway, okaE forms the unusual 2-dimethyl-3-methyl-azetidine ring to yield 12-deshydroxyl okaramine E from okaramine A. OkaE also catalyzes the hydroxylation of 12-deshydroxyl okaramine E to produce okaramine E. The biosynthesis begins with the NRPS okaA that condenses two tryptophan molecules into cyclo(L-Trp-L-Trp). Prenylation by the prenyltransferase okaC then leads to the formation of cyclo(N8-(alpha,alpha-dimethylallyl)-L-Trp-6a-(alpha,alpha-dime-thylallyl)-L-Trp). This is followed by indole 2,3-epoxidation by the FAD-dependent monooxygenase okaB to facilitate the formation of the hexahydropyrrolo[2,3-b]indole (HPI) moiety of okaramine C. The cytochrome P450 monooxygenase okaD then likely catalyzes formation of the eight-membered ring of okaramine A. The dioxygenase okaE further forms the unusual 2-dimethyl-3-methyl-azetidine ring to yield 12-deshydroxyl okaramine E, as well as the hydroxylation of 12-deshydroxyl okaramine E to produce okaramine E. The cytochrome P450 monoxygenase okaG converts 12-deshydroxyl okaramine E into 3-desmethyl okaramine B which is further methylated by the methyltransferase okaF into okaramine B. In a shunt pathway, okaG and okaF together are also able to convert okaramine E into okaramine D. Okaramine H is produced by nonenzymatic conversion from okaramine A. This chain is Iron/alpha-ketoglutarate-dependent dioxygenase okaE, found in Penicillium ochrochloron.